The sequence spans 96 residues: MPDKLVVEVAYALPEKQYLQRVTLEEGATVEEAIRASGLLELRTDIDLAKNKVGIYSRPVKLTDTVQDGDRVEIYRPLIADPKALRRQRAEKSAGR.

It belongs to the UPF0125 (RnfH) family.

This is Protein RnfH from Salmonella agona (strain SL483).